The chain runs to 305 residues: Probable cell division protein WhiA (305 aa).

The H-T-H motif DNA-binding region spans 269–302; that stretch reads TIKELGELLEPSLGKSGVNHRLRKLVEQANELRK.

The protein belongs to the WhiA family.

Involved in cell division and chromosome segregation. The polypeptide is Probable cell division protein WhiA (Lactococcus lactis subsp. lactis (strain IL1403) (Streptococcus lactis)).